Reading from the N-terminus, the 378-residue chain is MTMVGSRTSPIFNALRVELNAREAELVEIPLIQPADPFLDMAGEDLRRRIFLTENENGDSLCLRPEFTIPVCRNHIALNAATPKRYAYLGEVFRQRRDGAAEFLQAGIEDLGAADEAASDARSLADALSCVKAIAPDAPLEIVLGDQSVFAGMLKALGLPQGWRKKLLRSFGDAHSMDLALAELTGTQRRDPLPESLAVLVAEGDEIGLARMLEAEMLEAGISPGAGRTPVEIARRLIEKEDLAATHFPAAALDLLRQFLAIRVSLDTAAVTLRAFAADNALDLGAVLQKFEARADAIAQAGIEMKDIIYDASFGRPLDYYTGLVYEIRDASNRQDGVLAGGGRYDRLLTMLGACEAIPGVGFSIWLDRLQALAGEKQ.

The protein belongs to the class-II aminoacyl-tRNA synthetase family. HisZ subfamily. In terms of assembly, heteromultimer composed of HisG and HisZ subunits.

Its subcellular location is the cytoplasm. Its pathway is amino-acid biosynthesis; L-histidine biosynthesis; L-histidine from 5-phospho-alpha-D-ribose 1-diphosphate: step 1/9. In terms of biological role, required for the first step of histidine biosynthesis. May allow the feedback regulation of ATP phosphoribosyltransferase activity by histidine. This chain is ATP phosphoribosyltransferase regulatory subunit (hisZ), found in Brucella melitensis biotype 1 (strain ATCC 23456 / CCUG 17765 / NCTC 10094 / 16M).